The primary structure comprises 151 residues: Spore coat polysaccharide biosynthesis protein SpsL (151 aa).

It to dTDP-4-dehydrorhamnose reductase.

The protein operates within spore coat biogenesis; spore coat polysaccharide biosynthesis. This is Spore coat polysaccharide biosynthesis protein SpsL (spsL) from Bacillus subtilis (strain 168).